Consider the following 410-residue polypeptide: Dephospho-CoA kinase (410 aa).

The region spanning 3–201 (CIGITGGIGA…HRILPFAYNL (199 aa)) is the DPCK domain. 11 to 16 (GAGKSL) serves as a coordination point for ATP. The tract at residues 196–410 (PFAYNLSQRQ…EWADSTGWRL (215 aa)) is UPF0157.

It in the N-terminal section; belongs to the CoaE family. In the C-terminal section; belongs to the UPF0157 (GrpB) family.

It is found in the cytoplasm. It catalyses the reaction 3'-dephospho-CoA + ATP = ADP + CoA + H(+). It functions in the pathway cofactor biosynthesis; coenzyme A biosynthesis; CoA from (R)-pantothenate: step 5/5. In terms of biological role, catalyzes the phosphorylation of the 3'-hydroxyl group of dephosphocoenzyme A to form coenzyme A. The protein is Dephospho-CoA kinase of Mycobacterium leprae (strain TN).